The primary structure comprises 273 residues: Ethanolamine ammonia-lyase small subunit (273 aa).

Adenosylcob(III)alamin is bound by residues V164, E185, and C214.

The protein belongs to the EutC family. In terms of assembly, the basic unit is a heterodimer which dimerizes to form tetramers. The heterotetramers trimerize; 6 large subunits form a core ring with 6 small subunits projecting outwards. Adenosylcob(III)alamin serves as cofactor.

Its subcellular location is the bacterial microcompartment. The catalysed reaction is ethanolamine = acetaldehyde + NH4(+). The protein operates within amine and polyamine degradation; ethanolamine degradation. Its function is as follows. Catalyzes the deamination of various vicinal amino-alcohols to oxo compounds. Allows this organism to utilize ethanolamine as the sole source of nitrogen and carbon in the presence of external vitamin B12. The chain is Ethanolamine ammonia-lyase small subunit from Pseudomonas paraeruginosa (strain DSM 24068 / PA7) (Pseudomonas aeruginosa (strain PA7)).